A 399-amino-acid chain; its full sequence is Accessory Sec system protein translocase subunit SecY2 (399 aa).

Transmembrane regions (helical) follow at residues 14-34 (IFFT…SIVS), 60-80 (LNIF…LTLI), 102-122 (ALTL…YINK), 128-148 (SNML…VWLA), 152-172 (TTYG…KSIF), 183-203 (ASLI…LFFI), 237-257 (ISIM…NFIG), 272-292 (FTNP…GYFL), 335-355 (WFGS…ALLV), and 362-382 (VYFT…AETI).

This sequence belongs to the SecY/SEC61-alpha family. SecY2 subfamily. Component of the accessory SecA2/SecY2 protein translocase complex required to export cell wall proteins. May form heterotrimers with SecE and SecG subunits.

It is found in the cell membrane. Functionally, part of the accessory SecA2/SecY2 system specifically required for export of possible cell wall proteins. The central subunit of a protein translocation channel. This Staphylococcus epidermidis (strain ATCC 12228 / FDA PCI 1200) protein is Accessory Sec system protein translocase subunit SecY2.